Consider the following 408-residue polypeptide: Putative UPF0496 protein 2 (408 aa).

2 helical membrane-spanning segments follow: residues 224–244 and 252–272; these read RIAR…AIVA and ALVG…GAAR. Positions 385–408 are disordered; that stretch reads MARGLPPPSPATVTTTSEERLTSS.

It belongs to the UPF0496 family.

It localises to the membrane. The polypeptide is Putative UPF0496 protein 2 (Oryza sativa subsp. japonica (Rice)).